Consider the following 689-residue polypeptide: Glycine--tRNA ligase beta subunit (689 aa).

Belongs to the class-II aminoacyl-tRNA synthetase family. As to quaternary structure, tetramer of two alpha and two beta subunits.

It is found in the cytoplasm. The enzyme catalyses tRNA(Gly) + glycine + ATP = glycyl-tRNA(Gly) + AMP + diphosphate. The chain is Glycine--tRNA ligase beta subunit from Shewanella halifaxensis (strain HAW-EB4).